The chain runs to 69 residues: Cytochrome c oxidase subunit 8A, mitochondrial (69 aa).

Residues 1–25 (MSVLTPLLLRGLAGSARRLPVPRAQ) constitute a mitochondrion transit peptide. The short motif at 2 to 19 (SVLTPLLLRGLAGSARRL) is the SIFI-degron element. The Mitochondrial matrix portion of the chain corresponds to 26-36 (IHSKPPREQLG). Residues 37–60 (TMDVAIGITSCFLCFLLPAGWVLS) form a helical membrane-spanning segment. Residues 61–69 (HLESYKKRE) lie on the Mitochondrial intermembrane side of the membrane.

It belongs to the cytochrome c oxidase VIII family. In terms of assembly, component of the cytochrome c oxidase (complex IV, CIV), a multisubunit enzyme composed of 14 subunits. The complex is composed of a catalytic core of 3 subunits MT-CO1, MT-CO2 and MT-CO3, encoded in the mitochondrial DNA, and 11 supernumerary subunits COX4I, COX5A, COX5B, COX6A, COX6B, COX6C, COX7A, COX7B, COX7C, COX8 and NDUFA4, which are encoded in the nuclear genome. The complex exists as a monomer or a dimer and forms supercomplexes (SCs) in the inner mitochondrial membrane with NADH-ubiquinone oxidoreductase (complex I, CI) and ubiquinol-cytochrome c oxidoreductase (cytochrome b-c1 complex, complex III, CIII), resulting in different assemblies (supercomplex SCI(1)III(2)IV(1) and megacomplex MCI(2)III(2)IV(2)). Post-translationally, in response to mitochondrial stress, the precursor protein is ubiquitinated by the SIFI complex in the cytoplasm before mitochondrial import, leading to its degradation. Within the SIFI complex, UBR4 initiates ubiquitin chain that are further elongated or branched by KCMF1.

The protein resides in the mitochondrion inner membrane. It functions in the pathway energy metabolism; oxidative phosphorylation. Functionally, component of the cytochrome c oxidase, the last enzyme in the mitochondrial electron transport chain which drives oxidative phosphorylation. The respiratory chain contains 3 multisubunit complexes succinate dehydrogenase (complex II, CII), ubiquinol-cytochrome c oxidoreductase (cytochrome b-c1 complex, complex III, CIII) and cytochrome c oxidase (complex IV, CIV), that cooperate to transfer electrons derived from NADH and succinate to molecular oxygen, creating an electrochemical gradient over the inner membrane that drives transmembrane transport and the ATP synthase. Cytochrome c oxidase is the component of the respiratory chain that catalyzes the reduction of oxygen to water. Electrons originating from reduced cytochrome c in the intermembrane space (IMS) are transferred via the dinuclear copper A center (CU(A)) of subunit 2 and heme A of subunit 1 to the active site in subunit 1, a binuclear center (BNC) formed by heme A3 and copper B (CU(B)). The BNC reduces molecular oxygen to 2 water molecules using 4 electrons from cytochrome c in the IMS and 4 protons from the mitochondrial matrix. The sequence is that of Cytochrome c oxidase subunit 8A, mitochondrial (COX8A) from Carlito syrichta (Philippine tarsier).